A 130-amino-acid polypeptide reads, in one-letter code: Sec-independent protein translocase protein TatB (130 aa).

A helical transmembrane segment spans residues 1-21 (MFDISFTELIVIGIVALVVIG). The tract at residues 70 to 130 (VDSFQNSVHS…TPKEPRQSGS (61 aa)) is disordered. 2 stretches are compositionally biased toward basic and acidic residues: residues 80 to 89 (EINKIQETAD) and 96 to 111 (PEKE…KTEP).

The protein belongs to the TatB family. In terms of assembly, the Tat system comprises two distinct complexes: a TatABC complex, containing multiple copies of TatA, TatB and TatC subunits, and a separate TatA complex, containing only TatA subunits. Substrates initially bind to the TatABC complex, which probably triggers association of the separate TatA complex to form the active translocon.

It is found in the cell inner membrane. In terms of biological role, part of the twin-arginine translocation (Tat) system that transports large folded proteins containing a characteristic twin-arginine motif in their signal peptide across membranes. Together with TatC, TatB is part of a receptor directly interacting with Tat signal peptides. TatB may form an oligomeric binding site that transiently accommodates folded Tat precursor proteins before their translocation. This chain is Sec-independent protein translocase protein TatB, found in Nitrosomonas eutropha (strain DSM 101675 / C91 / Nm57).